We begin with the raw amino-acid sequence, 443 residues long: ATP-dependent protease ATPase subunit HslU (443 aa).

Residues isoleucine 20, 62-67, aspartate 255, glutamate 321, and arginine 393 contribute to the ATP site; that span reads GVGKTE.

Belongs to the ClpX chaperone family. HslU subfamily. In terms of assembly, a double ring-shaped homohexamer of HslV is capped on each side by a ring-shaped HslU homohexamer. The assembly of the HslU/HslV complex is dependent on binding of ATP.

It localises to the cytoplasm. In terms of biological role, ATPase subunit of a proteasome-like degradation complex; this subunit has chaperone activity. The binding of ATP and its subsequent hydrolysis by HslU are essential for unfolding of protein substrates subsequently hydrolyzed by HslV. HslU recognizes the N-terminal part of its protein substrates and unfolds these before they are guided to HslV for hydrolysis. This chain is ATP-dependent protease ATPase subunit HslU, found in Helicobacter pylori (strain J99 / ATCC 700824) (Campylobacter pylori J99).